The primary structure comprises 607 residues: UvrABC system protein C (607 aa).

In terms of domain architecture, GIY-YIG spans Asp12–Ile91. The 36-residue stretch at Glu200 to Ile235 folds into the UVR domain.

This sequence belongs to the UvrC family. Interacts with UvrB in an incision complex.

Its subcellular location is the cytoplasm. In terms of biological role, the UvrABC repair system catalyzes the recognition and processing of DNA lesions. UvrC both incises the 5' and 3' sides of the lesion. The N-terminal half is responsible for the 3' incision and the C-terminal half is responsible for the 5' incision. This is UvrABC system protein C from Carboxydothermus hydrogenoformans (strain ATCC BAA-161 / DSM 6008 / Z-2901).